Reading from the N-terminus, the 88-residue chain is Probable oxaloacetate decarboxylase gamma chain (88 aa).

Residues 13–35 form a helical membrane-spanning segment; it reads LMFSGMGFVIIFLLILIWAIGIV.

This sequence belongs to the OadG family. In terms of assembly, heterotrimer of an alpha, a beta and a gamma subunit. Requires Na(+) as cofactor.

It localises to the cell membrane. The enzyme catalyses oxaloacetate + 2 Na(+)(in) + H(+) = pyruvate + 2 Na(+)(out) + CO2. In terms of biological role, catalyzes the decarboxylation of oxaloacetate coupled to Na(+) translocation. In Mannheimia succiniciproducens (strain KCTC 0769BP / MBEL55E), this protein is Probable oxaloacetate decarboxylase gamma chain.